The following is an 86-amino-acid chain: Colicin-E9 immunity protein (86 aa).

The protein belongs to the colicins ColE2/ColE8/ColE9 and pyocins S1/S2 family.

In terms of biological role, this protein is able to protect a cell, which harbors the plasmid ColE9 encoding colicin E9, against colicin E9, it binds specifically to the DNase-type colicin and inhibits its bactericidal activity. The sequence is that of Colicin-E9 immunity protein (imm) from Escherichia coli.